Here is a 312-residue protein sequence, read N- to C-terminus: Aspartate carbamoyltransferase catalytic subunit (312 aa).

Carbamoyl phosphate contacts are provided by arginine 55 and threonine 56. Lysine 83 is a binding site for L-aspartate. Residues arginine 105, histidine 138, and glutamine 141 each contribute to the carbamoyl phosphate site. The L-aspartate site is built by arginine 171 and arginine 225. The carbamoyl phosphate site is built by glycine 266 and proline 267.

The protein belongs to the aspartate/ornithine carbamoyltransferase superfamily. ATCase family. As to quaternary structure, heterododecamer (2C3:3R2) of six catalytic PyrB chains organized as two trimers (C3), and six regulatory PyrI chains organized as three dimers (R2).

The enzyme catalyses carbamoyl phosphate + L-aspartate = N-carbamoyl-L-aspartate + phosphate + H(+). It functions in the pathway pyrimidine metabolism; UMP biosynthesis via de novo pathway; (S)-dihydroorotate from bicarbonate: step 2/3. Its function is as follows. Catalyzes the condensation of carbamoyl phosphate and aspartate to form carbamoyl aspartate and inorganic phosphate, the committed step in the de novo pyrimidine nucleotide biosynthesis pathway. This is Aspartate carbamoyltransferase catalytic subunit from Corynebacterium glutamicum (strain ATCC 13032 / DSM 20300 / JCM 1318 / BCRC 11384 / CCUG 27702 / LMG 3730 / NBRC 12168 / NCIMB 10025 / NRRL B-2784 / 534).